We begin with the raw amino-acid sequence, 328 residues long: Methionyl-tRNA formyltransferase (328 aa).

110-113 is a (6S)-5,6,7,8-tetrahydrofolate binding site; it reads SLLP.

Belongs to the Fmt family.

It catalyses the reaction L-methionyl-tRNA(fMet) + (6R)-10-formyltetrahydrofolate = N-formyl-L-methionyl-tRNA(fMet) + (6S)-5,6,7,8-tetrahydrofolate + H(+). Functionally, attaches a formyl group to the free amino group of methionyl-tRNA(fMet). The formyl group appears to play a dual role in the initiator identity of N-formylmethionyl-tRNA by promoting its recognition by IF2 and preventing the misappropriation of this tRNA by the elongation apparatus. This chain is Methionyl-tRNA formyltransferase, found in Prochlorococcus marinus (strain MIT 9515).